The following is a 244-amino-acid chain: MSMLCYTLIIAFLIGIWAAPKSEDNVPLGSPATSDLSDTSCAQTHEGLKTSRNTDQRHPAPKKAEDQELGSAANIIVDPKLFQKRRFQSPRVLFSTQPPPLSRDEQSVEFLDNEDTLNRNIRAKRENHPVHNQGEHSVCDSVSDWVIKTTATDIRGNMVTVMVDINRNNEVYKQYFFETKCRNPNPNPVQSERRGIDSRLWNSYCTTTQTFVRALTMEGNQASWRFIRIDTACVCVIIRKTDNF.

Positions 1–18 (MSMLCYTLIIAFLIGIWA) are cleaved as a signal peptide. Positions 19 to 125 (APKSEDNVPL…TLNRNIRAKR (107 aa)) are excised as a propeptide. Over residues 47-66 (GLKTSRNTDQRHPAPKKAED) the composition is skewed to basic and acidic residues. The interval 47 to 69 (GLKTSRNTDQRHPAPKKAEDQEL) is disordered. 2 cysteine pairs are disulfide-bonded: Cys139–Cys205 and Cys181–Cys233.

This sequence belongs to the NGF-beta family. In terms of assembly, homodimer; non-covalently linked. As to expression, expressed by the venom gland.

It is found in the secreted. Functionally, nerve growth factor is important for the development and maintenance of the sympathetic and sensory nervous systems. It stimulates division and differentiation of sympathetic and embryonic sensory neurons as well as basal forebrain cholinergic neurons in the brain. Its relevance in the snake venom is not clear. However, it has been shown to inhibit metalloproteinase-dependent proteolysis of platelet glycoprotein Ib alpha, suggesting a metalloproteinase inhibition to prevent metalloprotease autodigestion and/or protection against prey proteases. Binds a lipid between the two protein chains in the homodimer. The lipid-bound form promotes histamine relase from mouse mast cells, contrary to the lipid-free form. This chain is Venom nerve growth factor 2, found in Notechis scutatus scutatus (Mainland tiger snake).